The sequence spans 2462 residues: Serine/threonine-protein kinase Wnk (2462 aa).

3 disordered regions span residues 18–133 (NRAR…ASKS), 146–248 (NTLP…KSSS), and 365–461 (EDDV…DDDP). Composition is skewed to polar residues over residues 29–58 (DGTTSCTTQPQRNTSISSEEQTVQGANIQK) and 65–78 (NRSASSRQKPNPTS). The segment covering 94–124 (TLSAHTSTSSTTSIQSSPIEPASSLPTLNTT) has biased composition (low complexity). A compositionally biased stretch (polar residues) spans 146–155 (NTLPGKTASS). Basic and acidic residues-rich tracts occupy residues 190-205 (QSREQNEDEMDSKIEP), 237-247 (DTKKMEARKSS), and 396-413 (QSEKQAKSFDDITKKAES). Over residues 414–452 (SEASAEEAAVTGSSTDASASPLPSTSLVSTTSSATSITK) the composition is skewed to low complexity. Residues 471 to 729 (FKYDKEVGRG…CNELLESEFF (259 aa)) enclose the Protein kinase domain. ATP-binding positions include serine 481, 551–554 (TELM), and lysine 601. Aspartate 618 (proton acceptor) is an active-site residue. Phosphoserine; by autocatalysis is present on residues serine 628 and serine 632. Disordered regions lie at residues 844 to 873 (LQKQRESLPTNVDEDEEEEEESEDEEDGVK), 893 to 923 (LALSTNSVEPQQLSTRSNTSIPNSGIQQPVQ), and 1006 to 1055 (PQQQ…LQQQ). The span at 855–870 (VDEDEEEEEESEDEED) shows a compositional bias: acidic residues. Over residues 893-918 (LALSTNSVEPQQLSTRSNTSIPNSGI) the composition is skewed to polar residues. Low complexity-rich tracts occupy residues 1006 to 1034 (PQQQVNQQQQQPQMMQQIPQQVQVQQPQT) and 1041 to 1055 (HEQQPQQQQQPLQQQ). A coiled-coil region spans residues 1142–1178 (AQHQLQQLQQQQLQQQQLQQQQQIQQQQLQQQQLQQQ). Residues 1236–1251 (QGGQVTLSDAQQQQHP) are compositionally biased toward polar residues. Disordered regions lie at residues 1236 to 1256 (QGGQVTLSDAQQQQHPGFSAV), 1322 to 1382 (QQQQ…EQIS), 1418 to 1465 (GALE…PKLS), 1554 to 1578 (LTRQRSTFRSHQRHRSRDETASDIT), 1615 to 1699 (NIPN…KDKK), 1762 to 1790 (DTSENAQQATEAEAEKPKDKSGQAVGNQG), 1828 to 1895 (QASP…SVGS), 1929 to 1966 (HEKQLSKQPSLEKPSATSILTNNSDPPQRNPSNGSINQ), and 2122 to 2229 (THVQ…FIQS). Over residues 1559–1568 (STFRSHQRHR) the composition is skewed to basic residues. The segment covering 1627-1641 (STPPTTTSTMSSSST) has biased composition (low complexity). Residues 1642-1674 (ASRDAPNSSNDVTIGSGSVSRKTSTASEYTSLS) show a composition bias toward polar residues. Polar residues-rich tracts occupy residues 1828–1852 (QASPAMSSLKATSGQPQTQEITKPN), 1861–1894 (SVGQNTPTAALTSARGSGSSVYNSRRTSIDNSVG), and 1943–1966 (SATSILTNNSDPPQRNPSNGSINQ). Over residues 2125 to 2136 (QQPSNLQPQQQS) the composition is skewed to low complexity. Polar residues predominate over residues 2137–2160 (VHPNMTQQPQQTPLNGHPSMVNTL). A compositionally biased stretch (low complexity) spans 2161 to 2211 (QQQPPQQSLPMQTIQSQQQQHNQMPIISQQQQQQILMQQQQQQGSQQGSQQ). A compositionally biased stretch (polar residues) spans 2212–2229 (FNLPGTQQTHPQHQFIQS).

This sequence belongs to the protein kinase superfamily. Ser/Thr protein kinase family. WNK subfamily. Mg(2+) is required as a cofactor. In terms of processing, autophosphorylated. Autophosphorylation at Ser-628 and Ser-632 promotes its activity.

The protein resides in the cytoplasm. The catalysed reaction is L-seryl-[protein] + ATP = O-phospho-L-seryl-[protein] + ADP + H(+). It carries out the reaction L-threonyl-[protein] + ATP = O-phospho-L-threonyl-[protein] + ADP + H(+). Activated in response to hyperosmotic stress: cell shrinkage promotes formation of a membraneless compartment that concentrates wnk-1 with its downstrem substrates. Activation requires autophosphorylation. Autophosphorylation and subsequent activation is inhibited by increases in intracellular Cl(-) or K(+). Functionally, serine/threonine-protein kinase component of the WNK-SPAK/OSR1 kinase cascade, which plays an important role in the regulation of electrolyte homeostasis and regulatory volume increase in response to hyperosmotic stress. Wnk mediates regulatory volume increase in response to hyperosmotic stress by acting as a molecular crowding sensor, which senses cell shrinkage and mediates formation of a membraneless compartment by undergoing liquid-liquid phase separation. The membraneless compartment concentrates Wnk with its substrate Fray, promoting Wnk-dependent phosphorylation and activation of downstream kinase Fray. Following activation, Fray catalyzes phosphorylation of ion cotransporters Ncc69 and Irk1, regulating their activity. Phosphorylation of Na-K-Cl cotransporter Ncc69 promotes its activation and ion influx. Involved in circadian rhythms in small ventral lateral (sLNv) pacemaker neurons: in the morning, Wnk activity is repressed by high levels of intracellular chloride; in contrast Wnk activation in the evening promotes the activation of the inwardly rectifying potassium channel Irk1 via Fray. Acts as a positive regulator of the canonical Wnt signaling pathway during wing disk development. The sequence is that of Serine/threonine-protein kinase Wnk from Drosophila melanogaster (Fruit fly).